Reading from the N-terminus, the 348-residue chain is Fructose-1,6-bisphosphatase (348 aa).

The Pro/N-degron signature appears at 2-5 (PTLV). Phosphoserine is present on S12. AMP contacts are provided by residues 27–31 (IIEHQ) and 38–42 (TGDFT). Positions 79 and 108 each coordinate Mg(2+). 122–123 (SY) provides a ligand contact to AMP. D128, I130, and D131 together coordinate Mg(2+). Residue 131–134 (DGSS) coordinates substrate. R150 contacts AMP. Substrate is bound by residues 222–225 (NEGN), 255–260 (RYVGSM), Y276, and 286–288 (KLR). E292 contacts Mg(2+).

The protein belongs to the FBPase class 1 family. Homotetramer. The cofactor is Mg(2+). Ubiquitinated. Targeted for proteasomal degradation when cells are shifted to glucose-containing growth medium.

The enzyme catalyses beta-D-fructose 1,6-bisphosphate + H2O = beta-D-fructose 6-phosphate + phosphate. Its pathway is carbohydrate biosynthesis; gluconeogenesis. With respect to regulation, subject to complex allosteric regulation. The enzyme can assume an active R-state, or an inactive T-state. Intermediate conformations may exist. AMP acts as allosteric inhibitor. AMP binding affects the turnover of bound substrate and not the affinity for substrate. This Saccharomyces cerevisiae (strain ATCC 204508 / S288c) (Baker's yeast) protein is Fructose-1,6-bisphosphatase (FBP1).